The sequence spans 338 residues: Fe-S cluster assembly protein DRE2 (338 aa).

The interval 1 to 165 (MAKSGLLLIH…LPSFKKAANK (165 aa)) is N-terminal SAM-like domain. Residues 166–232 (PLPTFKKKVE…DDLLNEEDAK (67 aa)) are linker. The disordered stretch occupies residues 181 to 223 (VEARVHKAENDDDELEDEEDENLFDASRSKYFDEDDSESLDED). Acidic residues-rich tracts occupy residues 190-203 (NDDD…DENL) and 213-223 (DEDDSESLDED). [2Fe-2S] cluster contacts are provided by Cys-242, Cys-253, Cys-256, and Cys-258. The fe-S binding site A stretch occupies residues 242-258 (CGKSKTKKKKACKDCSC). Cys-301, Cys-304, Cys-312, and Cys-315 together coordinate [4Fe-4S] cluster. 2 short sequence motifs (cx2C motif) span residues 301-304 (CGSC) and 312-315 (CTGC). Residues 301–315 (CGSCSLGDAFRCTGC) form a fe-S binding site B region.

It belongs to the anamorsin family. Monomer. Interacts with TAH18. Interacts with MIA40. The cofactor is [2Fe-2S] cluster. [4Fe-4S] cluster serves as cofactor.

The protein resides in the cytoplasm. It localises to the mitochondrion intermembrane space. In terms of biological role, component of the cytosolic iron-sulfur (Fe-S) protein assembly (CIA) machinery required for the maturation of extramitochondrial Fe-S proteins. Part of an electron transfer chain functioning in an early step of cytosolic Fe-S biogenesis, facilitating the de novo assembly of a [4Fe-4S] cluster on the scaffold complex CFD1-NBP35. Electrons are transferred to DRE2 from NADPH via the FAD- and FMN-containing protein TAH18. TAH18-DRE2 are also required for the assembly of the diferric tyrosyl radical cofactor of ribonucleotide reductase (RNR), probably by providing electrons for reduction during radical cofactor maturation in the catalytic small subunit RNR2. This chain is Fe-S cluster assembly protein DRE2, found in Candida glabrata (strain ATCC 2001 / BCRC 20586 / JCM 3761 / NBRC 0622 / NRRL Y-65 / CBS 138) (Yeast).